The chain runs to 291 residues: tRNA pseudouridine synthase-like 1 (291 aa).

The active-site Nucleophile is the aspartate 66. Residue tyrosine 130 participates in substrate binding.

This sequence belongs to the tRNA pseudouridine synthase TruA family.

It catalyses the reaction a uridine in tRNA = a pseudouridine in tRNA. The chain is tRNA pseudouridine synthase-like 1 (Pusl1) from Mus musculus (Mouse).